We begin with the raw amino-acid sequence, 128 residues long: C-C motif chemokine 28 (128 aa).

An N-terminal signal peptide occupies residues 1 to 24 (MQQTGLTLALVALAVCVALPSSEA). 2 disulfides stabilise this stretch: C32–C60 and C33–C75. Residues 89–128 (EQAAKKNTKGNICHKKQAGKRKSKGAHQEKPEIHSHKSPY) form a disordered region. Positions 94-113 (KNTKGNICHKKQAGKRKSKG) are enriched in basic residues. The segment covering 114–128 (AHQEKPEIHSHKSPY) has biased composition (basic and acidic residues).

The protein belongs to the intercrine beta (chemokine CC) family.

It is found in the secreted. Chemotactic activity for resting CD4, CD8 T-cells and eosinophils. Binds to CCR3 and CCR10 and induces calcium mobilization in a dose-dependent manner. This is C-C motif chemokine 28 (CCL28) from Canis lupus familiaris (Dog).